The sequence spans 457 residues: Serine--tRNA ligase (457 aa).

Thr-252 to Glu-254 is an L-serine binding site. Residues Arg-283–Glu-285 and Val-299 each bind ATP. An L-serine-binding site is contributed by Glu-306. Glu-370–Ser-373 serves as a coordination point for ATP. An L-serine-binding site is contributed by Thr-406.

It belongs to the class-II aminoacyl-tRNA synthetase family. Type-1 seryl-tRNA synthetase subfamily. Homodimer. The tRNA molecule binds across the dimer.

The protein localises to the cytoplasm. It catalyses the reaction tRNA(Ser) + L-serine + ATP = L-seryl-tRNA(Ser) + AMP + diphosphate + H(+). The catalysed reaction is tRNA(Sec) + L-serine + ATP = L-seryl-tRNA(Sec) + AMP + diphosphate + H(+). It functions in the pathway aminoacyl-tRNA biosynthesis; selenocysteinyl-tRNA(Sec) biosynthesis; L-seryl-tRNA(Sec) from L-serine and tRNA(Sec): step 1/1. In terms of biological role, catalyzes the attachment of serine to tRNA(Ser). Is also able to aminoacylate tRNA(Sec) with serine, to form the misacylated tRNA L-seryl-tRNA(Sec), which will be further converted into selenocysteinyl-tRNA(Sec). The protein is Serine--tRNA ligase of Saccharolobus islandicus (strain M.14.25 / Kamchatka #1) (Sulfolobus islandicus).